The chain runs to 147 residues: Hemoglobin subunit beta (147 aa).

N-acetylserine is present on Ser2. The Globin domain maps to 3 to 147 (FLSAEEKNLV…VASALAHRYH (145 aa)). Residue Ser45 is modified to Phosphoserine. Lys60 is subject to N6-acetyllysine. His64 is a heme b binding site. Residue Lys83 is modified to N6-acetyllysine. Residue His93 coordinates heme b. At Cys94 the chain carries S-nitrosocysteine.

Belongs to the globin family. Heterotetramer of two alpha chains and two beta chains. As to expression, red blood cells.

Involved in oxygen transport from the lung to the various peripheral tissues. The sequence is that of Hemoglobin subunit beta (HBB) from Panthera pardus orientalis (Amur leopard).